The primary structure comprises 313 residues: MTPPTTQNGPLRHFLQFKDFSPAEIAYVLERTRIIKDKFKRYEPHMPLHDRTLAMVFEKASTRTRVSFEAGMYQMGGSVINLTSNDSQLGRSEPIEDTARVISRMVDIVMIRTFEQTRIERFASHSRVPVINGLTNEYHPCQILADIFTYIEHRGPIAGKTVAWIGDANNMSYTWLQAAEMLGFTLHVSTPAGYELDPARIGAPAAGVLKQFKDPMQACQGAHLVTTDVWTSMGYEAENEERRAAFADWCVDAEMMAAADPQAVFMHCLPAHRGEEVTGEVIDGAQSVVWDEAENRLHVQKALMEFLLLGQLA.

Residues 61 to 64 (STRT), Q88, R112, and 139 to 142 (HPCQ) each bind carbamoyl phosphate. L-ornithine-binding positions include N170, D228, and 232–233 (SM). Carbamoyl phosphate-binding positions include 268-269 (CL) and R296.

It belongs to the aspartate/ornithine carbamoyltransferase superfamily. OTCase family.

The protein localises to the cytoplasm. The catalysed reaction is carbamoyl phosphate + L-ornithine = L-citrulline + phosphate + H(+). It participates in amino-acid biosynthesis; L-arginine biosynthesis; L-arginine from L-ornithine and carbamoyl phosphate: step 1/3. Reversibly catalyzes the transfer of the carbamoyl group from carbamoyl phosphate (CP) to the N(epsilon) atom of ornithine (ORN) to produce L-citrulline. The polypeptide is Ornithine carbamoyltransferase (Bordetella parapertussis (strain 12822 / ATCC BAA-587 / NCTC 13253)).